The primary structure comprises 359 residues: 3-dehydroquinate synthase (359 aa).

NAD(+) contacts are provided by residues 71 to 76 (DGEAHK), 105 to 109 (GVIGD), 129 to 130 (TT), lysine 142, lysine 151, and 169 to 172 (TLHT). Residues glutamate 184, histidine 247, and histidine 264 each coordinate Zn(2+).

The protein belongs to the sugar phosphate cyclases superfamily. Dehydroquinate synthase family. It depends on NAD(+) as a cofactor. The cofactor is Co(2+). Requires Zn(2+) as cofactor.

Its subcellular location is the cytoplasm. The enzyme catalyses 7-phospho-2-dehydro-3-deoxy-D-arabino-heptonate = 3-dehydroquinate + phosphate. It functions in the pathway metabolic intermediate biosynthesis; chorismate biosynthesis; chorismate from D-erythrose 4-phosphate and phosphoenolpyruvate: step 2/7. Catalyzes the conversion of 3-deoxy-D-arabino-heptulosonate 7-phosphate (DAHP) to dehydroquinate (DHQ). The sequence is that of 3-dehydroquinate synthase from Neisseria meningitidis serogroup B (strain ATCC BAA-335 / MC58).